The chain runs to 119 residues: Ribonuclease P protein component (119 aa).

This sequence belongs to the RnpA family. As to quaternary structure, consists of a catalytic RNA component (M1 or rnpB) and a protein subunit.

It carries out the reaction Endonucleolytic cleavage of RNA, removing 5'-extranucleotides from tRNA precursor.. In terms of biological role, RNaseP catalyzes the removal of the 5'-leader sequence from pre-tRNA to produce the mature 5'-terminus. It can also cleave other RNA substrates such as 4.5S RNA. The protein component plays an auxiliary but essential role in vivo by binding to the 5'-leader sequence and broadening the substrate specificity of the ribozyme. In Listeria monocytogenes serotype 4a (strain HCC23), this protein is Ribonuclease P protein component.